Consider the following 1040-residue polypeptide: Multidrug resistance protein MdtB (1040 aa).

The next 12 membrane-spanning stretches (helical) occupy residues 16–36 (FILR…AGLV), 342–362 (DVQF…YLFL), 373–393 (IAVP…GFSV), 396–416 (LTLM…IVVI), 440–460 (IGFT…PLLF), 472–492 (FAVT…TLTP), 537–557 (WITL…YIVI), 865–885 (STIW…GVLY), 888–908 (FIHP…ALLA), 911–931 (ISGS…IGIV), 968–988 (ILMT…STGV), and 1002–1022 (GGLV…YLLF).

The protein belongs to the resistance-nodulation-cell division (RND) (TC 2.A.6) family. MdtB subfamily. Part of a tripartite efflux system composed of MdtA, MdtB and MdtC. MdtB forms a heteromultimer with MdtC.

The protein resides in the cell inner membrane. The polypeptide is Multidrug resistance protein MdtB (Musicola paradisiaca (strain Ech703) (Dickeya paradisiaca)).